The sequence spans 202 residues: MLSDELKLLVGLGNPGTEYEKTRHNVGFMVLEEIARKNNCSFRESKKLFGRTCEYGSGIEKTRLLMPNTYMNESGKSVRSAKDWFDFQNNQLIVLVDDMDLPLGKIRVRSKGSSGGHNGLKSIINHLGTAEFKRLKIGIGAPSNDQQERKSKTVSHVLGRFSKEEFIILNFIIQEIISCIESITSNNWEKISTRLNSYKPDN.

Tyr19 contributes to the tRNA binding site. The active-site Proton acceptor is His24. TRNA is bound by residues Tyr70, Asn72, and Asn118.

This sequence belongs to the PTH family. Monomer.

The protein localises to the cytoplasm. It catalyses the reaction an N-acyl-L-alpha-aminoacyl-tRNA + H2O = an N-acyl-L-amino acid + a tRNA + H(+). In terms of biological role, hydrolyzes ribosome-free peptidyl-tRNAs (with 1 or more amino acids incorporated), which drop off the ribosome during protein synthesis, or as a result of ribosome stalling. Catalyzes the release of premature peptidyl moieties from peptidyl-tRNA molecules trapped in stalled 50S ribosomal subunits, and thus maintains levels of free tRNAs and 50S ribosomes. The protein is Peptidyl-tRNA hydrolase of Prochlorococcus marinus (strain NATL2A).